We begin with the raw amino-acid sequence, 224 residues long: Casparian strip membrane protein 1 (224 aa).

The interval 1-22 (MSSGEPAAVSIPIHDHHGKAPA) is disordered. Residues 1–62 (MSSGEPAAVS…RGDHHRGSRC (62 aa)) are Cytoplasmic-facing. Residues 63–83 (LAFLDFILRIAAFGPALAAAI) traverse the membrane as a helical segment. Topologically, residues 84–110 (STGTSDETLSVFTEFYQFRARFDDFPA) are extracellular. A helical membrane pass occupies residues 111-131 (FLFFLVANAIVAGYLVLSLPF). Topologically, residues 132-145 (SAVLVIRPQTIGLR) are cytoplasmic. The chain crosses the membrane as a helical span at residues 146-166 (LLLLVCDMIMAAMLTAAASAA). Residues 167–200 (AAIVDLAHNGNLRANWVAICMQFHGFCQRTSGSV) are Extracellular-facing. A helical transmembrane segment spans residues 201 to 221 (VASFLTVVILMFLVILAACSI). At 222-224 (RKR) the chain is on the cytoplasmic side.

Belongs to the Casparian strip membrane proteins (CASP) family. In terms of assembly, homodimer and heterodimers.

The protein resides in the cell membrane. Regulates membrane-cell wall junctions and localized cell wall deposition. Required for establishment of the Casparian strip membrane domain (CSD) and the subsequent formation of Casparian strips, a cell wall modification of the root endodermis that determines an apoplastic barrier between the intraorganismal apoplasm and the extraorganismal apoplasm and prevents lateral diffusion. In Oryza sativa subsp. indica (Rice), this protein is Casparian strip membrane protein 1.